Here is a 282-residue protein sequence, read N- to C-terminus: NH(3)-dependent NAD(+) synthetase (282 aa).

Position 51 to 58 (51 to 58 (GISGGVDS)) interacts with ATP. Position 57 (Asp57) interacts with Mg(2+). Arg148 is a binding site for deamido-NAD(+). Residue Thr168 coordinates ATP. Glu173 lines the Mg(2+) pocket. Positions 181 and 188 each coordinate deamido-NAD(+). Residues Lys197 and Thr219 each contribute to the ATP site. 268–269 (HK) contributes to the deamido-NAD(+) binding site.

It belongs to the NAD synthetase family. Homodimer.

The enzyme catalyses deamido-NAD(+) + NH4(+) + ATP = AMP + diphosphate + NAD(+) + H(+). It functions in the pathway cofactor biosynthesis; NAD(+) biosynthesis; NAD(+) from deamido-NAD(+) (ammonia route): step 1/1. In terms of biological role, catalyzes the ATP-dependent amidation of deamido-NAD to form NAD. Uses ammonia as a nitrogen source. This is NH(3)-dependent NAD(+) synthetase from Burkholderia lata (strain ATCC 17760 / DSM 23089 / LMG 22485 / NCIMB 9086 / R18194 / 383).